A 453-amino-acid polypeptide reads, in one-letter code: Ras association domain-containing protein 10 (453 aa).

Positions 1-107 (MENEEWKVSV…VKFVLVRSEA (107 aa)) constitute a Ras-associating domain. The stretch at 262–295 (QKCDEVLLLQEQISRQEEAMEQMTVQIQEELNKR) forms a coiled coil. A compositionally biased stretch (basic and acidic residues) spans 299–310 (RRQEELSSKEQE). Disordered regions lie at residues 299-322 (RRQEELSSKEQESSLSDSGADQGG) and 402-453 (GVTT…ESLV). Polar residues-rich tracts occupy residues 402–411 (GVTTTGSPTD) and 433–444 (TGLSSMHSQDSD).

It localises to the cytoplasm. Its subcellular location is the cytosol. It is found in the cytoskeleton. The protein resides in the microtubule organizing center. The protein localises to the centrosome. It localises to the spindle pole. Functionally, may play role in regulating embryonic neurogenesis. The protein is Ras association domain-containing protein 10 (rassf10) of Xenopus laevis (African clawed frog).